The sequence spans 207 residues: Inner membrane-spanning protein YciB (207 aa).

The next 6 membrane-spanning stretches (helical) occupy residues 3–23 (FLFD…AEGQ), 51–71 (VLLA…WLLL), 78–98 (TMLW…VWFH), 105–125 (WKPS…HAVF), 150–170 (FMWI…AYSF), and 178–198 (FKLF…GLYL).

It belongs to the YciB family.

The protein localises to the cell inner membrane. Functionally, plays a role in cell envelope biogenesis, maintenance of cell envelope integrity and membrane homeostasis. The protein is Inner membrane-spanning protein YciB of Methylibium petroleiphilum (strain ATCC BAA-1232 / LMG 22953 / PM1).